We begin with the raw amino-acid sequence, 820 residues long: DNA mismatch repair protein MutS (820 aa).

615–622 (GPNMAGKS) is a binding site for ATP.

Belongs to the DNA mismatch repair MutS family.

Its function is as follows. This protein is involved in the repair of mismatches in DNA. It is possible that it carries out the mismatch recognition step. This protein has a weak ATPase activity. The polypeptide is DNA mismatch repair protein MutS (Anaplasma phagocytophilum (strain HZ)).